Reading from the N-terminus, the 366-residue chain is uncharacterized protein (366 aa).

The active-site Proton donor is the Glu139. The active-site Nucleophile is Glu249.

The protein belongs to the glycosyl hydrolase 53 family.

This is an uncharacterized protein from Niallia circulans (Bacillus circulans).